A 179-amino-acid chain; its full sequence is Inosine/xanthosine triphosphatase (179 aa).

E71 provides a ligand contact to Mg(2+). Residue E71–A72 participates in substrate binding.

It belongs to the YjjX NTPase family. In terms of assembly, homodimer. Mg(2+) serves as cofactor. Mn(2+) is required as a cofactor.

It carries out the reaction XTP + H2O = XDP + phosphate + H(+). It catalyses the reaction ITP + H2O = IDP + phosphate + H(+). Functionally, phosphatase that hydrolyzes non-canonical purine nucleotides such as XTP and ITP to their respective diphosphate derivatives. Probably excludes non-canonical purines from DNA/RNA precursor pool, thus preventing their incorporation into DNA/RNA and avoiding chromosomal lesions. The chain is Inosine/xanthosine triphosphatase from Shewanella sp. (strain MR-7).